A 567-amino-acid polypeptide reads, in one-letter code: Mitochondrial distribution and morphology protein 34 (567 aa).

The SMP-LTD domain occupies 1 to 224; it reads MSFKFNEESF…LPSALFNMSR (224 aa). Over residues 392-416 the composition is skewed to polar residues; that stretch reads NKATETSSNLNADSEITPVSSSHNA. Residues 392–453 are disordered; it reads NKATETSSNL…NRSSSFTSSI (62 aa). Residues 417 to 452 show a composition bias toward low complexity; sequence TSSVNTITSLTTSSLGSTAGSSNSKNTNRSSSFTSS.

The protein belongs to the MDM34 family. As to quaternary structure, component of the ER-mitochondria encounter structure (ERMES) or MDM complex, composed of MMM1, MDM10, MDM12 and MDM34.

It localises to the mitochondrion outer membrane. Functionally, component of the ERMES/MDM complex, which serves as a molecular tether to connect the endoplasmic reticulum (ER) and mitochondria. Components of this complex are involved in the control of mitochondrial shape and protein biogenesis, and function in nonvesicular lipid trafficking between the ER and mitochondria. MDM34 is required for the interaction of the ER-resident membrane protein MMM1 and the outer mitochondrial membrane-resident beta-barrel protein MDM10. In Vanderwaltozyma polyspora (strain ATCC 22028 / DSM 70294 / BCRC 21397 / CBS 2163 / NBRC 10782 / NRRL Y-8283 / UCD 57-17) (Kluyveromyces polysporus), this protein is Mitochondrial distribution and morphology protein 34.